The sequence spans 147 residues: Large ribosomal subunit protein uL15 (147 aa).

Positions 1 to 28 (MIRRRKKVRKLRGSHTHGWGCKKKHRGG) are enriched in basic residues. The tract at residues 1–43 (MIRRRKKVRKLRGSHTHGWGCKKKHRGGGSKGGRGMAGTGKRN) is disordered. Gly residues predominate over residues 29 to 38 (GSKGGRGMAG).

The protein belongs to the universal ribosomal protein uL15 family. As to quaternary structure, part of the 50S ribosomal subunit.

In terms of biological role, binds to the 23S rRNA. The protein is Large ribosomal subunit protein uL15 of Pyrococcus abyssi (strain GE5 / Orsay).